The chain runs to 105 residues: Large ribosomal subunit protein uL24 (105 aa).

Belongs to the universal ribosomal protein uL24 family. In terms of assembly, part of the 50S ribosomal subunit.

Its function is as follows. One of two assembly initiator proteins, it binds directly to the 5'-end of the 23S rRNA, where it nucleates assembly of the 50S subunit. Functionally, one of the proteins that surrounds the polypeptide exit tunnel on the outside of the subunit. The chain is Large ribosomal subunit protein uL24 from Parvibaculum lavamentivorans (strain DS-1 / DSM 13023 / NCIMB 13966).